A 286-amino-acid chain; its full sequence is 4-hydroxybenzoate octaprenyltransferase (286 aa).

The next 9 membrane-spanning stretches (helical) occupy residues 19–39 (AGWLLLLWPTLSALWVASHGF), 42–62 (WHLLTVFTLGTILMRSAGCCV), 92–112 (ALVLGAVLALLAFGLVLTTNA), 115–135 (IAWSFAALAVTLAYPFAKRYV), 137–157 (MPQAVLGVAFSFGIPMAFAAV), 161–181 (VPLLAWVLLLGNLCWVIAYDT), 206–226 (FDVAGVMLSYLVYLSVWALAL), 233–253 (AIYWMAIGLAGLQALWHGWLI), and 264–284 (AFRLNHWLGFTVFAGIALSYL).

This sequence belongs to the UbiA prenyltransferase family. Requires Mg(2+) as cofactor.

It is found in the cell inner membrane. The enzyme catalyses all-trans-octaprenyl diphosphate + 4-hydroxybenzoate = 4-hydroxy-3-(all-trans-octaprenyl)benzoate + diphosphate. It participates in cofactor biosynthesis; ubiquinone biosynthesis. Its function is as follows. Catalyzes the prenylation of para-hydroxybenzoate (PHB) with an all-trans polyprenyl group. Mediates the second step in the final reaction sequence of ubiquinone-8 (UQ-8) biosynthesis, which is the condensation of the polyisoprenoid side chain with PHB, generating the first membrane-bound Q intermediate 3-octaprenyl-4-hydroxybenzoate. The protein is 4-hydroxybenzoate octaprenyltransferase of Polaromonas sp. (strain JS666 / ATCC BAA-500).